The chain runs to 2835 residues: Vanchrobactin synthetase VabF (2835 aa).

A condensation 1 region spans residues 16 to 452 (EDQWPLIGTQ…IPPSEKQQIT (437 aa)). The adenylation 1 stretch occupies residues 473 to 880 (QQTVESKPNE…GRCDHQIKIR (408 aa)). One can recognise a Carrier 1 domain in the interval 988-1062 (APITQPEQLL…MMAGQMVPLQ (75 aa)). An O-(pantetheine 4'-phosphoryl)serine modification is found at S1023. 2 condensation regions span residues 1081–1499 (WFEE…KIQQ) and 1539–1961 (DVLP…EWDL). Residues 1992–2394 (QQQRSPHQLA…GRSDDQIKIR (403 aa)) form an adenylation 2 region. Residues 2503-2578 (NAHPGLETQL…KLASLLLDDD (76 aa)) form the Carrier 2 domain. S2538 carries the O-(pantetheine 4'-phosphoryl)serine modification. Residues 2601 to 2821 (ALFCVNSASG…APENVRQIGE (221 aa)) form a thioesterase region.

The protein belongs to the NRP synthetase family. Pantetheine 4'-phosphate serves as cofactor.

It catalyses the reaction holo-[peptidyl-carrier protein] + L-arginine + ATP = L-arginyl-[peptidyl-carrier protein] + AMP + diphosphate. The catalysed reaction is holo-[peptidyl-carrier protein] + L-serine + ATP = L-seryl-[peptidyl-carrier protein] + AMP + diphosphate. The protein operates within siderophore biosynthesis. Its function is as follows. Involved in the synthesis of the siderophore vanchrobactin. Probably adenylates L-arginine via its first adenylation domain and loads it onto its first peptidyl carrier domain via a thioester linkage to the phosphopanthetheine moiety. In addition, may adenylate L-serine via its second adenylation domain and loads it onto its second peptidyl carrier domain via a thioester linkage to the phosphopanthetheine moiety. The thioesterase domain may release vanchrobactin after condensation of the siderophore components. The chain is Vanchrobactin synthetase VabF from Vibrio anguillarum (Listonella anguillarum).